The chain runs to 456 residues: GPI-anchored protein 13 (456 aa).

Positions 1 to 23 (MRSPSLAVAATTVLGLFSSSALA) are cleaved as a signal peptide. An N-linked (GlcNAc...) asparagine glycan is attached at Asn-27. The GPI-anchor amidated glycine moiety is linked to residue Gly-433. A propeptide spans 434-456 (AAAVNVVPTTAFGLFAIILASIF) (removed in mature form).

In terms of processing, the GPI-anchor is attached to the protein in the endoplasmic reticulum and serves to target the protein to the cell surface. There, the glucosamine-inositol phospholipid moiety is cleaved off and the GPI-modified mannoprotein is covalently attached via its lipidless GPI glycan remnant to the 1,6-beta-glucan of the outer cell wall layer.

It localises to the secreted. Its subcellular location is the cell wall. The protein resides in the membrane. In terms of biological role, cell wall protein which contributes to cell wall synthesis and is important for acquiring normal surface properties. Required for virulence in a mouse infection model. This Candida albicans (strain SC5314 / ATCC MYA-2876) (Yeast) protein is GPI-anchored protein 13 (PGA13).